Here is a 525-residue protein sequence, read N- to C-terminus: GMP synthase [glutamine-hydrolyzing] (525 aa).

One can recognise a Glutamine amidotransferase type-1 domain in the interval 9–207; it reads RILILDFGSQ…VKEICHCEAL (199 aa). The active-site Nucleophile is the cysteine 86. Catalysis depends on residues histidine 181 and glutamate 183. Residues 208 to 400 form the GMPS ATP-PPase domain; sequence WTPATIIEDA…LGLPYNMLYR (193 aa). An ATP-binding site is contributed by 235-241; that stretch reads SGGVDSS.

As to quaternary structure, homodimer.

The enzyme catalyses XMP + L-glutamine + ATP + H2O = GMP + L-glutamate + AMP + diphosphate + 2 H(+). Its pathway is purine metabolism; GMP biosynthesis; GMP from XMP (L-Gln route): step 1/1. In terms of biological role, catalyzes the synthesis of GMP from XMP. This chain is GMP synthase [glutamine-hydrolyzing], found in Tolumonas auensis (strain DSM 9187 / NBRC 110442 / TA 4).